The sequence spans 102 residues: Co-chaperonin GroES (102 aa).

Belongs to the GroES chaperonin family. As to quaternary structure, heptamer of 7 subunits arranged in a ring. Interacts with the chaperonin GroEL.

Its subcellular location is the cytoplasm. In terms of biological role, together with the chaperonin GroEL, plays an essential role in assisting protein folding. The GroEL-GroES system forms a nano-cage that allows encapsulation of the non-native substrate proteins and provides a physical environment optimized to promote and accelerate protein folding. GroES binds to the apical surface of the GroEL ring, thereby capping the opening of the GroEL channel. This chain is Co-chaperonin GroES, found in Streptomyces avermitilis (strain ATCC 31267 / DSM 46492 / JCM 5070 / NBRC 14893 / NCIMB 12804 / NRRL 8165 / MA-4680).